The sequence spans 1234 residues: DNA-directed RNA polymerase subunit beta (1234 aa).

The segment at 1169–1234 (ESVDEDADEL…LDLDDFGDEH (66 aa)) is disordered. Acidic residues-rich tracts occupy residues 1171-1180 (VDEDADELEV) and 1191-1234 (EKEE…GDEH).

It belongs to the RNA polymerase beta chain family. As to quaternary structure, the RNAP catalytic core consists of 2 alpha, 1 beta, 1 beta' and 1 omega subunit. When a sigma factor is associated with the core the holoenzyme is formed, which can initiate transcription.

The catalysed reaction is RNA(n) + a ribonucleoside 5'-triphosphate = RNA(n+1) + diphosphate. Functionally, DNA-dependent RNA polymerase catalyzes the transcription of DNA into RNA using the four ribonucleoside triphosphates as substrates. The polypeptide is DNA-directed RNA polymerase subunit beta (Clostridium botulinum (strain Langeland / NCTC 10281 / Type F)).